A 292-amino-acid polypeptide reads, in one-letter code: Protease HtpX homolog (292 aa).

2 consecutive transmembrane segments (helical) span residues 4–24 (ILLF…VASL) and 39–59 (GALL…SLLI). His144 contacts Zn(2+). Glu145 is a catalytic residue. His148 is a binding site for Zn(2+). Transmembrane regions (helical) follow at residues 159–179 (LIQG…GYAV) and 199–219 (VTTI…VAWF). Glu224 is a Zn(2+) binding site.

This sequence belongs to the peptidase M48B family. It depends on Zn(2+) as a cofactor.

Its subcellular location is the cell inner membrane. This is Protease HtpX homolog from Verminephrobacter eiseniae (strain EF01-2).